The sequence spans 49 residues: Large ribosomal subunit protein bL33B (49 aa).

The protein belongs to the bacterial ribosomal protein bL33 family.

In Bacillus licheniformis, this protein is Large ribosomal subunit protein bL33B (rpmGB).